A 324-amino-acid chain; its full sequence is Methionyl-tRNA formyltransferase (324 aa).

Residue 109-112 (SILP) coordinates (6S)-5,6,7,8-tetrahydrofolate.

It belongs to the Fmt family.

The catalysed reaction is L-methionyl-tRNA(fMet) + (6R)-10-formyltetrahydrofolate = N-formyl-L-methionyl-tRNA(fMet) + (6S)-5,6,7,8-tetrahydrofolate + H(+). In terms of biological role, attaches a formyl group to the free amino group of methionyl-tRNA(fMet). The formyl group appears to play a dual role in the initiator identity of N-formylmethionyl-tRNA by promoting its recognition by IF2 and preventing the misappropriation of this tRNA by the elongation apparatus. This chain is Methionyl-tRNA formyltransferase, found in Acidothermus cellulolyticus (strain ATCC 43068 / DSM 8971 / 11B).